Here is a 290-residue protein sequence, read N- to C-terminus: Small ribosomal subunit protein uS2 (290 aa).

Residues 263-282 (ATAGATWEAEAGGDWAAESA) show a composition bias toward low complexity. The interval 263 to 290 (ATAGATWEAEAGGDWAAESAQPNPETKW) is disordered.

This sequence belongs to the universal ribosomal protein uS2 family. Component of the small ribosomal subunit. Mature ribosomes consist of a small (40S) and a large (60S) subunit. The 40S subunit contains about 33 different proteins and 1 molecule of RNA (18S). The 60S subunit contains about 49 different proteins and 3 molecules of RNA (25S, 5.8S and 5S). Interacts with rps21.

Its subcellular location is the cytoplasm. In terms of biological role, required for the assembly and/or stability of the 40S ribosomal subunit. Required for the processing of the 20S rRNA-precursor to mature 18S rRNA in a late step of the maturation of 40S ribosomal subunits. This is Small ribosomal subunit protein uS2 (rps0) from Talaromyces stipitatus (strain ATCC 10500 / CBS 375.48 / QM 6759 / NRRL 1006) (Penicillium stipitatum).